Consider the following 60-residue polypeptide: Large ribosomal subunit protein bL32 (60 aa).

This sequence belongs to the bacterial ribosomal protein bL32 family.

The sequence is that of Large ribosomal subunit protein bL32 from Latilactobacillus sakei subsp. sakei (strain 23K) (Lactobacillus sakei subsp. sakei).